A 248-amino-acid chain; its full sequence is 7-cyano-7-deazaguanine synthase (248 aa).

22–32 (LSGGLDSTTCL) serves as a coordination point for ATP. Zn(2+) is bound by residues C216, C225, C228, and C231.

This sequence belongs to the QueC family. Zn(2+) is required as a cofactor.

The catalysed reaction is 7-carboxy-7-deazaguanine + NH4(+) + ATP = 7-cyano-7-deazaguanine + ADP + phosphate + H2O + H(+). The protein operates within purine metabolism; 7-cyano-7-deazaguanine biosynthesis. Catalyzes the ATP-dependent conversion of 7-carboxy-7-deazaguanine (CDG) to 7-cyano-7-deazaguanine (preQ(0)). This is 7-cyano-7-deazaguanine synthase from Leptospira biflexa serovar Patoc (strain Patoc 1 / Ames).